The following is a 336-amino-acid chain: Dihydroorotate dehydrogenase (quinone) (336 aa).

Residues Ala62–Lys66 and Thr86 each bind FMN. Lys66 serves as a coordination point for substrate. A substrate-binding site is contributed by Asn111 to Phe115. The FMN site is built by Asn139 and Asn172. Asn172 contributes to the substrate binding site. Ser175 acts as the Nucleophile in catalysis. Residue Asn177 participates in substrate binding. FMN-binding residues include Lys217 and Thr245. Asn246–Thr247 is a binding site for substrate. FMN-binding positions include Gly268, Gly297, and Tyr318–Ser319.

It belongs to the dihydroorotate dehydrogenase family. Type 2 subfamily. Monomer. FMN is required as a cofactor.

The protein resides in the cell membrane. It carries out the reaction (S)-dihydroorotate + a quinone = orotate + a quinol. It participates in pyrimidine metabolism; UMP biosynthesis via de novo pathway; orotate from (S)-dihydroorotate (quinone route): step 1/1. In terms of biological role, catalyzes the conversion of dihydroorotate to orotate with quinone as electron acceptor. This Yersinia enterocolitica serotype O:8 / biotype 1B (strain NCTC 13174 / 8081) protein is Dihydroorotate dehydrogenase (quinone).